We begin with the raw amino-acid sequence, 234 residues long: uncharacterized protein (234 aa).

Helical transmembrane passes span 20-40 (LILL…FKVI) and 176-196 (VMAF…LHFL).

It belongs to the CpsC/CapA family.

It is found in the cell membrane. This is an uncharacterized protein from Bacillus subtilis (strain 168).